The chain runs to 1086 residues: Tyrosine-protein kinase receptor svh-2 (1086 aa).

An N-terminal signal peptide occupies residues 1 to 34 (MVLGSSQSSAKELTTQSSIFRFLVLLLCFTSATG). Over 35–651 (GQINGKLLNG…DKKGSSPGWK (617 aa)) the chain is Extracellular. N-linked (GlcNAc...) asparagine glycosylation is found at Asn-276, Asn-299, Asn-461, Asn-554, and Asn-617. Residues 652–672 (IAIAIISVMTIILIVAIIVYY) form a helical membrane-spanning segment. The Cytoplasmic portion of the chain corresponds to 673 to 1086 (MRNRFPRIKT…LLSECSETSV (414 aa)). One can recognise a Protein kinase domain in the interval 735 to 996 (VDKLDPIGQG…SDLVTIIPNV (262 aa)). ATP-binding positions include 741-749 (IGQGHYGVV) and Lys-767. The active-site Proton acceptor is Asp-858. Residue Tyr-890 is modified to Phosphotyrosine. A disordered region spans residues 1056–1086 (AELPSDSPSTSTAIPQSTPYQLLSECSETSV). The segment covering 1061-1086 (DSPSTSTAIPQSTPYQLLSECSETSV) has biased composition (polar residues).

This sequence belongs to the protein kinase superfamily. Tyr protein kinase family. As to quaternary structure, interacts (via cytoplasmic domain) with mlk-1. Interacts with shc-1 (via SH2 domain). May interact (when tyrosine-phosphorylated) with tns-1 (via SH2 domain). In terms of processing, may be autophosphorylated on Tyr-890 following dimerization. As to expression, expressed in body wall and vulva muscles, pharynx, intestine, excretory canals, distal tip cells and some neurons. Expressed in D-type motor neurons upon axon injury.

Its subcellular location is the cell membrane. The catalysed reaction is L-tyrosyl-[protein] + ATP = O-phospho-L-tyrosyl-[protein] + ADP + H(+). Functionally, receptor tyrosine kinase which may phosphorylate mlk-1, a component of the mlk-1, mek-1 and kgb-1 pathway. Involved in axon regeneration after injury by promoting the generation of productive and stable growth cones. In Caenorhabditis elegans, this protein is Tyrosine-protein kinase receptor svh-2.